Consider the following 293-residue polypeptide: uncharacterized protein (293 aa).

The region spanning 1–58 (MELKQLITFITAAEHVNFTLTAKMLNYAQSSVTSQIKSLEEEIGTPLFERLGKRLILT) is the HTH lysR-type domain. Residues 18 to 37 (FTLTAKMLNYAQSSVTSQIK) constitute a DNA-binding region (H-T-H motif).

The protein belongs to the LysR transcriptional regulatory family.

It localises to the cytoplasm. This is an uncharacterized protein from Bacillus subtilis (strain 168).